The primary structure comprises 243 residues: Benzil reductase ((S)-benzoin forming) (243 aa).

Residues Ile6, Asn80, Tyr147, Lys151, and Thr184 each coordinate NADP(+). Residue Tyr147 is the Proton acceptor of the active site.

Belongs to the short-chain dehydrogenases/reductases (SDR) family.

The protein resides in the cytoplasm. The catalysed reaction is (S)-benzoin + NADP(+) = benzil + NADPH + H(+). Functionally, reduces benzil stereospecifically to (S)-benzoin. In Bacillus subtilis (strain 168), this protein is Benzil reductase ((S)-benzoin forming) (yueD).